The primary structure comprises 532 residues: T-complex protein 1 subunit epsilon (532 aa).

Belongs to the TCP-1 chaperonin family. As to quaternary structure, component of the T-complex protein 1 (TCP1) complex.

The protein resides in the cytoplasm. Molecular chaperone; assists the folding of proteins upon ATP hydrolysis. The polypeptide is T-complex protein 1 subunit epsilon (CCT5) (Encephalitozoon cuniculi (strain GB-M1) (Microsporidian parasite)).